The chain runs to 205 residues: Urease accessory protein UreG (205 aa).

14-21 (GPVGSGKT) is a binding site for GTP.

It belongs to the SIMIBI class G3E GTPase family. UreG subfamily. In terms of assembly, homodimer. UreD, UreF and UreG form a complex that acts as a GTP-hydrolysis-dependent molecular chaperone, activating the urease apoprotein by helping to assemble the nickel containing metallocenter of UreC. The UreE protein probably delivers the nickel.

The protein resides in the cytoplasm. Facilitates the functional incorporation of the urease nickel metallocenter. This process requires GTP hydrolysis, probably effectuated by UreG. The polypeptide is Urease accessory protein UreG (Escherichia coli).